Consider the following 221-residue polypeptide: Factor arrest protein 7 (221 aa).

Component of a complex at least composed of FAR3, FAR7, FAR8, FAR10, FAR11 and VPS64.

In terms of biological role, participates in the control of the reentry into the cell cycle following pheromone treatment. The chain is Factor arrest protein 7 (FAR7) from Saccharomyces cerevisiae (strain ATCC 204508 / S288c) (Baker's yeast).